A 351-amino-acid polypeptide reads, in one-letter code: Tropomodulin-2 (351 aa).

A Phosphoserine modification is found at S25.

Belongs to the tropomodulin family. In terms of assembly, binds to the N-terminus of tropomyosin and to actin. Neuronal-tissue specific.

The protein localises to the cytoplasm. Its subcellular location is the cytoskeleton. Functionally, blocks the elongation and depolymerization of the actin filaments at the pointed end. The Tmod/TM complex contributes to the formation of the short actin protofilament, which in turn defines the geometry of the membrane skeleton. The chain is Tropomodulin-2 (Tmod2) from Mus musculus (Mouse).